Here is a 194-residue protein sequence, read N- to C-terminus: Protein GrpE (194 aa).

Over residues 1–14 (MSKMNPNEKKENAS) the composition is skewed to basic and acidic residues. The interval 1–48 (MSKMNPNEKKENASKNENVNNEEATNLQEEQSNAADEAAGSDNVSGEV) is disordered. Over residues 24-34 (ATNLQEEQSNA) the composition is skewed to polar residues.

It belongs to the GrpE family. Homodimer.

The protein resides in the cytoplasm. Functionally, participates actively in the response to hyperosmotic and heat shock by preventing the aggregation of stress-denatured proteins, in association with DnaK and GrpE. It is the nucleotide exchange factor for DnaK and may function as a thermosensor. Unfolded proteins bind initially to DnaJ; upon interaction with the DnaJ-bound protein, DnaK hydrolyzes its bound ATP, resulting in the formation of a stable complex. GrpE releases ADP from DnaK; ATP binding to DnaK triggers the release of the substrate protein, thus completing the reaction cycle. Several rounds of ATP-dependent interactions between DnaJ, DnaK and GrpE are required for fully efficient folding. The protein is Protein GrpE of Parabacteroides distasonis (strain ATCC 8503 / DSM 20701 / CIP 104284 / JCM 5825 / NCTC 11152).